Here is a 325-residue protein sequence, read N- to C-terminus: GMP reductase (325 aa).

Cys173 acts as the Thioimidate intermediate in catalysis. 202–225 serves as a coordination point for NADP(+); it reads IIADGGIRDHGDIAKSVRFGASMV.

This sequence belongs to the IMPDH/GMPR family. GuaC type 2 subfamily.

The catalysed reaction is IMP + NH4(+) + NADP(+) = GMP + NADPH + 2 H(+). In terms of biological role, catalyzes the irreversible NADPH-dependent deamination of GMP to IMP. It functions in the conversion of nucleobase, nucleoside and nucleotide derivatives of G to A nucleotides, and in maintaining the intracellular balance of A and G nucleotides. The sequence is that of GMP reductase from Variovorax paradoxus (strain S110).